The primary structure comprises 209 residues: Eukaryotic translation initiation factor 4E (209 aa).

This sequence belongs to the eukaryotic initiation factor 4E family. In terms of assembly, eIF4F is a multi-subunit complex, the composition of which varies with external and internal environmental conditions. It is composed of at least eIF4A, eIF4E and eIF4G. eIF4E is also known to interact with other partners.

Its function is as follows. Recognizes and binds the 7-methylguanosine-containing mRNA cap during an early step in the initiation of protein synthesis and facilitates ribosome binding by inducing the unwinding of the mRNAs secondary structures. This chain is Eukaryotic translation initiation factor 4E (TIF45), found in Candida glabrata (strain ATCC 2001 / BCRC 20586 / JCM 3761 / NBRC 0622 / NRRL Y-65 / CBS 138) (Yeast).